The primary structure comprises 354 residues: Uroporphyrinogen decarboxylase (354 aa).

Residues 30 to 34, aspartate 79, tyrosine 154, serine 209, and histidine 333 contribute to the substrate site; that span reads RQAGR.

It belongs to the uroporphyrinogen decarboxylase family. In terms of assembly, homodimer.

The protein resides in the cytoplasm. The catalysed reaction is uroporphyrinogen III + 4 H(+) = coproporphyrinogen III + 4 CO2. The protein operates within porphyrin-containing compound metabolism; protoporphyrin-IX biosynthesis; coproporphyrinogen-III from 5-aminolevulinate: step 4/4. Its function is as follows. Catalyzes the decarboxylation of four acetate groups of uroporphyrinogen-III to yield coproporphyrinogen-III. The protein is Uroporphyrinogen decarboxylase of Mycolicibacterium gilvum (strain PYR-GCK) (Mycobacterium gilvum (strain PYR-GCK)).